The following is a 343-amino-acid chain: Hydroxycarboxylic acid receptor 1 (343 aa).

The Extracellular segment spans residues 1–21 (MDNGSCCLIEGEPISQVMPPL). An N-linked (GlcNAc...) asparagine glycan is attached at N3. The chain crosses the membrane as a helical span at residues 22–42 (LILVFVLGALGNGIALCGFCF). The Cytoplasmic segment spans residues 43–49 (HMKTWKS). A helical transmembrane segment spans residues 50 to 70 (STIYLFNLAVADFLLMICLPL). The Extracellular segment spans residues 71–90 (RTDYYLRRRHWIFGDIACRL). C88 and C165 are joined by a disulfide. The chain crosses the membrane as a helical span at residues 91-111 (VLFKLAMNRAGSIVFLTVVAV). At 112 to 131 (DRYFKVVHPHHMVNAISNRT) the chain is on the cytoplasmic side. A helical transmembrane segment spans residues 132–152 (AAATACVLWTLVILGTVYLLM). Residues 153-182 (ESHLCVQGTLSSCESFIMESANGWHDVMFQ) are Extracellular-facing. The chain crosses the membrane as a helical span at residues 183–203 (LEFFLPLTIILFCSVNVVWSL). Topologically, residues 204–220 (RRRQQLTRQARMRRATR) are cytoplasmic. A helical transmembrane segment spans residues 221–241 (FIMVVASVFITCYLPSVLARL). Topologically, residues 242 to 259 (YFLWTVPTSACDPSVHTA) are extracellular. Residues 260–280 (LHVTLSFTYLNSMLDPLVYYF) traverse the membrane as a helical segment. Topologically, residues 281–343 (SSPSLPKFYT…SDGQWDLQVC (63 aa)) are cytoplasmic. A compositionally biased stretch (polar residues) spans 319-334 (CSKSSIDGANRSQRPS). Residues 319 to 343 (CSKSSIDGANRSQRPSDGQWDLQVC) form a disordered region.

Belongs to the G-protein coupled receptor 1 family. In terms of tissue distribution, highly expressed in subcutaneous fat and omental fat and detectable in lower levels in brain and many other tissues. High levels detected in epididymal and subcutaneous fat with slightly lower in omental fat, low levels are detected in the brain, skeletal muscle, kidney, liver and the pancreas (at protein level).

It is found in the cell membrane. Functionally, acts as a receptor for L-lactate and mediates its anti-lipolytic effect through a G(i)-protein-mediated pathway. The polypeptide is Hydroxycarboxylic acid receptor 1 (Hcar1) (Mus musculus (Mouse)).